Here is a 117-residue protein sequence, read N- to C-terminus: uncharacterized protein (117 aa).

The protein resides in the plastid. The protein localises to the chloroplast. This is an uncharacterized protein from Chlamydomonas reinhardtii (Chlamydomonas smithii).